A 425-amino-acid polypeptide reads, in one-letter code: Transmembrane protein 184A (425 aa).

Transmembrane regions (helical) follow at residues 51-71 (LFLT…TALL), 96-116 (LLFI…LLGG), 133-153 (FVIY…SAIM), 189-209 (TLQF…LQAF), 226-246 (VTLV…LFYF), 261-281 (FLTI…LAIL), and 303-323 (LAAG…SLAL). A disordered region spans residues 375 to 425 (QYTQQSTHEAPGPGQGGHPSPSTHPGPASGSGGGKKSRNIEKRMLIPSEDL). The span at 392-402 (HPSPSTHPGPA) shows a compositional bias: low complexity.

This sequence belongs to the TMEM184 family. Expressed in vascular cells (at protein level).

Its subcellular location is the cell membrane. It is found in the cytoplasm. The protein resides in the perinuclear region. It localises to the early endosome membrane. The protein localises to the endosome. Its subcellular location is the cytoplasmic vesicle. It is found in the secretory vesicle membrane. The protein resides in the cytoplasmic vesicle membrane. Acts as a heparin receptor in vascular cells. May be involved in vesicle transport in exocrine cells and Sertoli cells. This is Transmembrane protein 184A (Tmem184a) from Rattus norvegicus (Rat).